A 371-amino-acid chain; its full sequence is 3-isopropylmalate dehydrogenase (371 aa).

An NAD(+)-binding site is contributed by 77 to 90; it reads GPKWDDNPPHLRPE. Positions 97, 107, 135, and 224 each coordinate substrate. Residues Asp224, Asp248, and Asp252 each coordinate Mg(2+). 282–294 lines the NAD(+) pocket; the sequence is GSAPDIAGMNKAN.

The protein belongs to the isocitrate and isopropylmalate dehydrogenases family. LeuB type 1 subfamily. Homodimer. Requires Mg(2+) as cofactor. It depends on Mn(2+) as a cofactor.

The protein resides in the cytoplasm. The enzyme catalyses (2R,3S)-3-isopropylmalate + NAD(+) = 4-methyl-2-oxopentanoate + CO2 + NADH. The protein operates within amino-acid biosynthesis; L-leucine biosynthesis; L-leucine from 3-methyl-2-oxobutanoate: step 3/4. Functionally, catalyzes the oxidation of 3-carboxy-2-hydroxy-4-methylpentanoate (3-isopropylmalate) to 3-carboxy-4-methyl-2-oxopentanoate. The product decarboxylates to 4-methyl-2 oxopentanoate. The chain is 3-isopropylmalate dehydrogenase from Geobacillus kaustophilus (strain HTA426).